We begin with the raw amino-acid sequence, 360 residues long: Phenylalanine--tRNA ligase alpha subunit (360 aa).

Position 260 (E260) interacts with Mg(2+).

The protein belongs to the class-II aminoacyl-tRNA synthetase family. Phe-tRNA synthetase alpha subunit type 1 subfamily. As to quaternary structure, tetramer of two alpha and two beta subunits. It depends on Mg(2+) as a cofactor.

Its subcellular location is the cytoplasm. The catalysed reaction is tRNA(Phe) + L-phenylalanine + ATP = L-phenylalanyl-tRNA(Phe) + AMP + diphosphate + H(+). This Methylobacterium radiotolerans (strain ATCC 27329 / DSM 1819 / JCM 2831 / NBRC 15690 / NCIMB 10815 / 0-1) protein is Phenylalanine--tRNA ligase alpha subunit.